Reading from the N-terminus, the 555-residue chain is Protein NRT1/ PTR FAMILY 2.1 (555 aa).

12 helical membrane passes run 32-52 (TLLG…VFLI), 68-88 (IVNG…DSFF), 91-111 (IPVI…LTLI), 127-147 (ILCQ…LALV), 175-195 (FFNW…TAIV), 205-225 (LGFG…ISGK), 324-344 (VLPL…QASM), 369-389 (VIVL…IYPI), 401-421 (LQQV…SAIV), 437-457 (VLWL…HYMA), 476-496 (SVTS…INLI), and 517-537 (WVLV…SWYF).

The protein belongs to the major facilitator superfamily. Proton-dependent oligopeptide transporter (POT/PTR) (TC 2.A.17) family. As to expression, expressed in roots.

The protein localises to the membrane. Transporter involved in a passive nitrate efflux. The chain is Protein NRT1/ PTR FAMILY 2.1 (NPF2.1) from Arabidopsis thaliana (Mouse-ear cress).